The primary structure comprises 341 residues: Cyanuric acid amidohydrolase (341 aa).

The tract at residues 1-90 (MAPIEILKFP…HVTFFLRSPG (90 aa)) is RU A. Residues arginine 51 and 71 to 72 (SG) each bind substrate. An RU B region spans residues 95-229 (GLSAAVGHTR…CHILVLASTS (135 aa)). The active site involves lysine 144. Substrate-binding positions include arginine 176 and 212-213 (SS). The active-site Nucleophile is serine 212. The segment at 235 to 341 (LHAVSRPMAD…SLCLVYETSI (107 aa)) is RU C. Position 273 (glutamate 273) interacts with Mg(2+). Substrate contacts are provided by residues arginine 300 and 319 to 320 (SG). Residues alanine 322, glutamine 325, glycine 326, proline 327, and glycine 330 each coordinate Mg(2+).

It belongs to the cyclic amide hydrolase (CyAH) family. In terms of assembly, homotetramer.

The catalysed reaction is cyanurate + H2O = 1-carboxybiuret + H(+). It functions in the pathway xenobiotic degradation; atrazine degradation; biuret from cyanurate: step 1/1. Inhibited by barbituric acid. Functionally, responsible for the hydrolysis of cyanuric acid, an intermediate formed during catabolism of s-triazine based compounds in herbicides such as atrazine and polymers such as melamine. Catalyzes the hydrolytic opening of the s-triazine ring of cyanuric acid (2,4,6-trihydroxy-s-triazine) to yield carbon dioxide and carboxybiuret, which spontaneously decarboxylates to biuret. Only active on cyanuric acid and N-methylisocyanuric acid. This Sarocladium sp protein is Cyanuric acid amidohydrolase.